We begin with the raw amino-acid sequence, 150 residues long: 3-hydroxyacyl-[acyl-carrier-protein] dehydratase FabZ (150 aa).

H57 is a catalytic residue.

It belongs to the thioester dehydratase family. FabZ subfamily.

The protein resides in the cytoplasm. The catalysed reaction is a (3R)-hydroxyacyl-[ACP] = a (2E)-enoyl-[ACP] + H2O. In terms of biological role, involved in unsaturated fatty acids biosynthesis. Catalyzes the dehydration of short chain beta-hydroxyacyl-ACPs and long chain saturated and unsaturated beta-hydroxyacyl-ACPs. This Actinobacillus succinogenes (strain ATCC 55618 / DSM 22257 / CCUG 43843 / 130Z) protein is 3-hydroxyacyl-[acyl-carrier-protein] dehydratase FabZ.